Consider the following 152-residue polypeptide: Large ribosomal subunit protein bL9 (152 aa).

This sequence belongs to the bacterial ribosomal protein bL9 family.

Functionally, binds to the 23S rRNA. This chain is Large ribosomal subunit protein bL9, found in Trichormus variabilis (strain ATCC 29413 / PCC 7937) (Anabaena variabilis).